The primary structure comprises 672 residues: Bifunctional polymyxin resistance protein ArnA (672 aa).

The formyltransferase ArnAFT stretch occupies residues 1-310; that stretch reads MKAIVFAYHD…EMGMVPQAKL (310 aa). The Proton donor; for formyltransferase activity role is filled by H104. (6R)-10-formyltetrahydrofolate contacts are provided by residues R114 and 136–140; that span reads VSRAD. The segment at 320–672 is dehydrogenase ArnADH; the sequence is RRTRVLILGV…HADNVTDTQG (353 aa). NAD(+) is bound by residues D353 and 374 to 375; that span reads DI. UDP-alpha-D-glucuronate is bound by residues A399, Y404, and 438–439; that span reads TS. Catalysis depends on E440, which acts as the Proton acceptor; for decarboxylase activity. UDP-alpha-D-glucuronate contacts are provided by residues R466, N498, 532-541, and Y619; that span reads KLVDGGAQKR. The Proton donor; for decarboxylase activity role is filled by R625.

In the N-terminal section; belongs to the Fmt family. UDP-L-Ara4N formyltransferase subfamily. It in the C-terminal section; belongs to the NAD(P)-dependent epimerase/dehydratase family. UDP-glucuronic acid decarboxylase subfamily. In terms of assembly, homohexamer, formed by a dimer of trimers.

It carries out the reaction UDP-alpha-D-glucuronate + NAD(+) = UDP-beta-L-threo-pentopyranos-4-ulose + CO2 + NADH. The catalysed reaction is UDP-4-amino-4-deoxy-beta-L-arabinose + (6R)-10-formyltetrahydrofolate = UDP-4-deoxy-4-formamido-beta-L-arabinose + (6S)-5,6,7,8-tetrahydrofolate + H(+). The protein operates within nucleotide-sugar biosynthesis; UDP-4-deoxy-4-formamido-beta-L-arabinose biosynthesis; UDP-4-deoxy-4-formamido-beta-L-arabinose from UDP-alpha-D-glucuronate: step 1/3. It functions in the pathway nucleotide-sugar biosynthesis; UDP-4-deoxy-4-formamido-beta-L-arabinose biosynthesis; UDP-4-deoxy-4-formamido-beta-L-arabinose from UDP-alpha-D-glucuronate: step 3/3. It participates in bacterial outer membrane biogenesis; lipopolysaccharide biosynthesis. Its function is as follows. Bifunctional enzyme that catalyzes the oxidative decarboxylation of UDP-glucuronic acid (UDP-GlcUA) to UDP-4-keto-arabinose (UDP-Ara4O) and the addition of a formyl group to UDP-4-amino-4-deoxy-L-arabinose (UDP-L-Ara4N) to form UDP-L-4-formamido-arabinose (UDP-L-Ara4FN). The modified arabinose is attached to lipid A and is required for resistance to polymyxin and cationic antimicrobial peptides. This Pectobacterium carotovorum subsp. carotovorum (strain PC1) protein is Bifunctional polymyxin resistance protein ArnA.